The chain runs to 161 residues: DNA-directed RNA polymerase III subunit RPC9 (161 aa).

The interval 75-96 (QEDEGEERESSGAKDAEKSGIS) is disordered. Basic and acidic residues predominate over residues 82–96 (RESSGAKDAEKSGIS).

This sequence belongs to the eukaryotic RPC9 RNA polymerase subunit family. Component of the RNA polymerase III (Pol III) complex consisting of 17 subunits. Forms a Pol III subcomplex with RPC25/RPC8. Interacts with BURF1/TDS4.

It localises to the nucleus. DNA-dependent RNA polymerase catalyzes the transcription of DNA into RNA using the four ribonucleoside triphosphates as substrates. Specific peripheric component of RNA polymerase III which synthesizes small RNAs, such as 5S rRNA and tRNAs. The RPC25/RPC8-RPC17/RPC9 subcomplex may bind Pol III transcripts emerging from the adjacent exit pore during elongation. The polypeptide is DNA-directed RNA polymerase III subunit RPC9 (RPC17) (Saccharomyces cerevisiae (strain ATCC 204508 / S288c) (Baker's yeast)).